The sequence spans 136 residues: Autophagy-related protein 41 (136 aa).

The interval 127–136 (QNYRLWLSSV) is ATG9-binding.

In terms of assembly, interacts with ATG9.

The protein localises to the preautophagosomal structure membrane. Involved in both selective and non-selective autophagy. Does not appear to play a role in determining the size of autophagosomes, but rather influences their formation rate. With ATG9, plays a role in the delivery of donor membrane to expanding phagophore. This is Autophagy-related protein 41 from Saccharomyces cerevisiae (strain ATCC 204508 / S288c) (Baker's yeast).